A 782-amino-acid polypeptide reads, in one-letter code: Cleavage and polyadenylation specificity factor subunit 2 (782 aa).

Residues 407 to 416 (KKLEQSKEAD) are compositionally biased toward basic and acidic residues. A disordered region spans residues 407 to 449 (KKLEQSKEADIDSSDESDIEEDIDQPSAHKTKHDLMMKGEGSR). Acidic residues predominate over residues 417 to 430 (IDSSDESDIEEDID). Phosphoserine occurs at positions 419, 420, and 423. The segment covering 439 to 449 (HDLMMKGEGSR) has biased composition (basic and acidic residues). At S660 the chain carries Phosphoserine.

This sequence belongs to the metallo-beta-lactamase superfamily. RNA-metabolizing metallo-beta-lactamase-like family. CPSF2/YSH1 subfamily. Component of the cleavage and polyadenylation specificity factor (CPSF) complex, composed of CPSF1, CPSF2, CPSF3, CPSF4 and FIP1L1. Interacts with CPSF3, CSTF2 and SYMPK. Interacts with ZC3H3.

It is found in the nucleus. Component of the cleavage and polyadenylation specificity factor (CPSF) complex that play a key role in pre-mRNA 3'-end formation, recognizing the AAUAAA signal sequence and interacting with poly(A) polymerase and other factors to bring about cleavage and poly(A) addition. Involved in the histone 3' end pre-mRNA processing. This Homo sapiens (Human) protein is Cleavage and polyadenylation specificity factor subunit 2 (CPSF2).